The following is a 248-amino-acid chain: Triosephosphate isomerase (248 aa).

9–11 (NWK) is a substrate binding site. H94 functions as the Electrophile in the catalytic mechanism. The Proton acceptor role is filled by E166. Substrate contacts are provided by residues G172, S212, and 233–234 (GG).

This sequence belongs to the triosephosphate isomerase family. Homodimer.

It is found in the cytoplasm. The enzyme catalyses D-glyceraldehyde 3-phosphate = dihydroxyacetone phosphate. It participates in carbohydrate biosynthesis; gluconeogenesis. The protein operates within carbohydrate degradation; glycolysis; D-glyceraldehyde 3-phosphate from glycerone phosphate: step 1/1. Involved in the gluconeogenesis. Catalyzes stereospecifically the conversion of dihydroxyacetone phosphate (DHAP) to D-glyceraldehyde-3-phosphate (G3P). In Thermoanaerobacter pseudethanolicus (strain ATCC 33223 / 39E) (Clostridium thermohydrosulfuricum), this protein is Triosephosphate isomerase.